We begin with the raw amino-acid sequence, 275 residues long: MSNLQNIIECAFERVAEITPTNAEAELRAAVDEAIEGLDKGIYRVAEKNEQGEWIVNQWLKKAVLLSFRLNDNVVVDGAETKYYDKVPVKFADYDVERFKTEGFRAVPGAVVRKGSHISKGVVLMPSFVNIGAYVGEGTMVDTWATVGSCAQIGKNVHLSGGVGIGGVLEPLQANPTIIGDNCFIGARSEIVEGVIVEEGCVISMGVFIGQSTKIYDRETGEIFYGRVPAGSVVVSGSLPSKCGKYNLYCAVIVKKVDAKTLGKVGINELLRTIE.

Substrate contacts are provided by Arg105 and Asp142.

The protein belongs to the transferase hexapeptide repeat family. In terms of assembly, homotrimer.

The protein localises to the cytoplasm. It carries out the reaction (S)-2,3,4,5-tetrahydrodipicolinate + succinyl-CoA + H2O = (S)-2-succinylamino-6-oxoheptanedioate + CoA. It participates in amino-acid biosynthesis; L-lysine biosynthesis via DAP pathway; LL-2,6-diaminopimelate from (S)-tetrahydrodipicolinate (succinylase route): step 1/3. This chain is 2,3,4,5-tetrahydropyridine-2,6-dicarboxylate N-succinyltransferase, found in Histophilus somni (strain 129Pt) (Haemophilus somnus).